Here is a 229-residue protein sequence, read N- to C-terminus: Peptidase E (229 aa).

Active-site charge relay system residues include Ser-120, Asp-135, and His-157.

It belongs to the peptidase S51 family.

It localises to the cytoplasm. The enzyme catalyses Dipeptidase E catalyzes the hydrolysis of dipeptides Asp-|-Xaa. It does not act on peptides with N-terminal Glu, Asn or Gln, nor does it cleave isoaspartyl peptides.. In terms of biological role, hydrolyzes dipeptides containing N-terminal aspartate residues. May play a role in allowing the cell to use peptide aspartate to spare carbon otherwise required for the synthesis of the aspartate family of amino acids. This chain is Peptidase E, found in Salmonella arizonae (strain ATCC BAA-731 / CDC346-86 / RSK2980).